The primary structure comprises 950 residues: Double-stranded RNA-binding protein Staufen homolog (950 aa).

Disordered stretches follow at residues 25–168, 202–274, and 288–342; these read VSGA…QQQQ, QQQL…QPST, and VTPV…NTKE. Low complexity predominate over residues 31-43; sequence QQRSMMSQQRGGS. Polar residues predominate over residues 45–66; sequence AINSSKSPYQLQTSSISQFSHL. Residues 67 to 77 are compositionally biased toward low complexity; that stretch reads QQQQQQQQQQQ. The segment covering 78-122 has biased composition (polar residues); it reads LVNNYHKQKQMSPDITSHQFSSSTGGGMPTQNGNYQSMSGSSIHT. 3 stretches are compositionally biased toward low complexity: residues 130 to 143, 153 to 168, and 202 to 253; these read QLSL…YSSQ, QQHH…QQQQ, and QQQL…ILQH. Residues 254 to 274 are compositionally biased toward polar residues; it reads SPTSGKSLSSAPHGTSVQPST. The span at 313-322 shows a compositional bias: basic and acidic residues; that stretch reads SGRDSVHVSD. 4 DRBM domains span residues 344 to 411, 435 to 546, 578 to 645, and 690 to 758; these read TPMC…ETKC, TPTV…ILKN, SEIS…ELRK, and NPIS…LLGY. Disordered stretches follow at residues 758–833 and 922–950; these read YTKP…HTAS and DIHP…DFSK. Positions 765 to 782 are enriched in polar residues; the sequence is PTKSSFKNPSTGEAGQTN. Residues 922–937 show a composition bias toward basic and acidic residues; it reads DIHPGGDGPQVKKDVL.

Strongly expressed in nervous tissue (at protein level).

It localises to the perikaryon. The protein localises to the cell projection. In terms of biological role, RNA-binding protein which is required for syntaxin location in sensory neurons during long-term synaptic facilitation. Binds to syntaxin mRNA and is required to maintain its accumulation at the axon hillock following neuronal stimulation and at the opposite pole in stable unstimulated sensory neurons. This Aplysia californica (California sea hare) protein is Double-stranded RNA-binding protein Staufen homolog.